The following is a 156-amino-acid chain: Probable succinate transporter subunit YjjB (156 aa).

4 helical membrane passes run 7 to 27, 54 to 74, 86 to 106, and 128 to 148; these read WALL…AMVF, FGMN…IIGI, VFTV…TAMI, and FLKA…PGIW.

The protein belongs to the ThrE exporter (TC 2.A.79) family. In terms of assembly, the transporter is composed of YjjB and YjjP.

It localises to the cell inner membrane. Functionally, involved in succinate export with YjjP. Both proteins are required for export. In Pectobacterium carotovorum subsp. carotovorum (strain PC1), this protein is Probable succinate transporter subunit YjjB.